The sequence spans 509 residues: Maturase K (509 aa).

This sequence belongs to the intron maturase 2 family. MatK subfamily.

The protein localises to the plastid. The protein resides in the chloroplast. Functionally, usually encoded in the trnK tRNA gene intron. Probably assists in splicing its own and other chloroplast group II introns. This chain is Maturase K, found in Clematis vitalba (Evergreen clematis).